The following is a 668-amino-acid chain: DNA ligase (668 aa).

NAD(+) is bound by residues 31–35 (DAEYD), 80–81 (SL), and Glu-112. Lys-114 (N6-AMP-lysine intermediate) is an active-site residue. NAD(+) contacts are provided by Arg-135, Glu-172, Lys-289, and Lys-313. Positions 407, 410, 425, and 431 each coordinate Zn(2+). The 78-residue stretch at 591–668 (SVPQPLAGKV…NEEQLIELLN (78 aa)) folds into the BRCT domain.

The protein belongs to the NAD-dependent DNA ligase family. LigA subfamily. Mg(2+) serves as cofactor. Requires Mn(2+) as cofactor.

It carries out the reaction NAD(+) + (deoxyribonucleotide)n-3'-hydroxyl + 5'-phospho-(deoxyribonucleotide)m = (deoxyribonucleotide)n+m + AMP + beta-nicotinamide D-nucleotide.. In terms of biological role, DNA ligase that catalyzes the formation of phosphodiester linkages between 5'-phosphoryl and 3'-hydroxyl groups in double-stranded DNA using NAD as a coenzyme and as the energy source for the reaction. It is essential for DNA replication and repair of damaged DNA. The protein is DNA ligase of Aliivibrio fischeri (strain ATCC 700601 / ES114) (Vibrio fischeri).